A 310-amino-acid chain; its full sequence is Protoheme IX farnesyltransferase (310 aa).

The next 9 helical transmembrane spans lie at 30 to 47 (VTTLIVMTAWTGAFFGAA), 50 to 70 (GLPLVSWTLFHALLGIGLVSG), 102 to 122 (LGHGMVVSLVMMIGGAGYLGL), 126 to 146 (WLTAALALMTSVVYLMAYTPL), 152 to 172 (ICTTIGAFPGAMPPVLGWTAI), 181 to 201 (VALFAILFFWQFPHFHSIAWL), 228 to 248 (IVIYAAFLLPITLTPFLLRFA), 251 to 271 (IYFLAALVLGSMLFWVSLRMF), and 286 to 306 (ARQLLLASVTYLPLLFAVMML).

It belongs to the UbiA prenyltransferase family. Protoheme IX farnesyltransferase subfamily.

It localises to the cell inner membrane. It carries out the reaction heme b + (2E,6E)-farnesyl diphosphate + H2O = Fe(II)-heme o + diphosphate. It functions in the pathway porphyrin-containing compound metabolism; heme O biosynthesis; heme O from protoheme: step 1/1. Its function is as follows. Converts heme B (protoheme IX) to heme O by substitution of the vinyl group on carbon 2 of heme B porphyrin ring with a hydroxyethyl farnesyl side group. This Koribacter versatilis (strain Ellin345) protein is Protoheme IX farnesyltransferase.